The chain runs to 154 residues: Ribonuclease 8 (154 aa).

The N-terminal stretch at Met1–Ala27 is a signal peptide. Catalysis depends on His42, which acts as the Proton acceptor. 3 cysteine pairs are disulfide-bonded: Cys64/Cys118, Cys82/Cys133, and Cys89/Cys96. Substrate is bound by residues Lys65 to Thr69 and Lys90. His149 functions as the Proton donor in the catalytic mechanism.

This sequence belongs to the pancreatic ribonuclease family.

The protein resides in the secreted. In terms of biological role, has a low ribonuclease activity. In Miopithecus talapoin (Angolan talapoin), this protein is Ribonuclease 8 (RNASE8).